Consider the following 799-residue polypeptide: Oxygen sensor protein DosP (799 aa).

Residues 10 to 81 (ADGIFFPALE…YIRHNREGGK (72 aa)) form the PAS 1 domain. The heme site is built by H69 and M87. In terms of domain architecture, PAS 2 spans 134-207 (QTRQLIIAVD…LQQLLWKTAR (74 aa)). One can recognise a PAC domain in the interval 208–260 (DQDEFLLLTRTGEKIWIKASISPVYDVLAHLQNLVMTFSDITEERQIRQLEGN). One can recognise a GGDEF domain in the interval 402–532 (VSPVVYLIGV…GGNGWQFFSP (131 aa)). Residues 541–795 (RLVLGAALKE…EIPGWMSSVL (255 aa)) enclose the EAL domain.

As to quaternary structure, homodimer; has been previously suggested to be a homotetramer based on size exclusion chromatography. Forms a complex with DosC. It depends on heme as a cofactor. Mg(2+) is required as a cofactor. The heme distal ligand is coordinated by Met-87 in the active Fe(2+) (ferrous) form, by O(2) in the O(2)-bound form and by H(2)O in the inactive Fe(3+) (ferric) form.

It carries out the reaction 3',3'-c-di-GMP + H2O = 5'-phosphoguanylyl(3'-&gt;5')guanosine + H(+). Its activity is regulated as follows. Has c-di-GMP PDE activity in both Fe(2+) and Fe(3+)-bound forms; this activity is increased 6-7 fold by binding of O(2) and CO and NO. Has cAMP PDE activity only when the heme is in the Fe(2+) form. cAMP PDE activity is inhibited by oxidation of the heme iron and by binding of external ligands such as CO and NO. Also strongly inhibited by etazolate hydrochloride, a selective cAMP PDE inhibitor. PDE activity is inhibited in the absence of oxygen. Heme-based oxygen sensor protein displaying phosphodiesterase (PDE) activity toward c-di-GMP in response to oxygen availability. Involved in the modulation of intracellular c-di-GMP levels, in association with DosC which catalyzes the biosynthesis of c-di-GMP (diguanylate cyclase activity). Cyclic-di-GMP is a second messenger which controls cell surface-associated traits in bacteria. Has very poor PDE activity on cAMP but is not active with cGMP, bis(p-nitrophenyl) phosphate or p-nitrophenyl phosphate. Via its PDE activity on c-di-GMP, DosP regulates biofilm formation through the repression of transcription of the csgBAC operon, which encodes curli structural subunits. The chain is Oxygen sensor protein DosP (dosP) from Escherichia coli (strain K12).